A 126-amino-acid polypeptide reads, in one-letter code: Fluoride-specific ion channel FluC (126 aa).

4 helical membrane passes run 4-24, 36-56, 67-85, and 101-121; these read LLLVCLGGALGSGARYLTSAW, GTLLVNVSGSFLLAGIMTASL, LFLAAGVMGGFTTYSSFNY, and AYLLATVVGCLVAAFAATLLV. Residues Gly75 and Thr78 each coordinate Na(+).

It belongs to the fluoride channel Fluc/FEX (TC 1.A.43) family.

It is found in the cell inner membrane. It carries out the reaction fluoride(in) = fluoride(out). Its activity is regulated as follows. Na(+) is not transported, but it plays an essential structural role and its presence is essential for fluoride channel function. Fluoride-specific ion channel. Important for reducing fluoride concentration in the cell, thus reducing its toxicity. The chain is Fluoride-specific ion channel FluC from Anaeromyxobacter sp. (strain K).